Consider the following 823-residue polypeptide: Apoptosis-resistant E3 ubiquitin protein ligase 1 (823 aa).

The Filamin repeat unit spans residues 64–158 (WDWKDPYEVG…VAYSPYYKIF (95 aa)). Residues 315–345 (PPMHMSSSQRRPSTAIEEDDEDSPSECHTPE) form a disordered region. The segment at 483–789 (SISDWSKNFE…THSTLPTAHT (307 aa)) is interaction with SOCS2. The 341-residue stretch at 483–823 (SISDWSKNFE…SEGCEGFGML (341 aa)) folds into the HECT domain. The active-site Glycyl thioester intermediate is the Cys790.

In terms of assembly, interacts with SOCS2. Interacts (via HECT domain) with HTRA2, DIABLO/SMAC and SEPTIN4; in the cytoplasm following induction of apoptosis. In terms of processing, autoubiquitinated in vitro in the presence of E2 enzyme UBE2D1/UBCH5A. In terms of tissue distribution, detected in brain, testis, heart, liver, lung and kidney with very low levels in skeletal muscle and spleen.

The catalysed reaction is S-ubiquitinyl-[E2 ubiquitin-conjugating enzyme]-L-cysteine + [acceptor protein]-L-lysine = [E2 ubiquitin-conjugating enzyme]-L-cysteine + N(6)-ubiquitinyl-[acceptor protein]-L-lysine.. It participates in protein modification; protein ubiquitination. Its function is as follows. E3 ubiquitin-protein ligase that catalyzes 'Lys-11'- or 'Lys-33'-linked polyubiquitin chains, with some preference for 'Lys-33' linkages. E3 ubiquitin-protein ligases accept ubiquitin from an E2 ubiquitin-conjugating enzyme in the form of a thioester and then directly transfers the ubiquitin to targeted substrates. Ubiquitinates SEPTIN4, DIABLO/SMAC and HTRA2 in vitro. Modulates pulmonary inflammation by targeting SOCS2 for ubiquitination and subsequent degradation by the proteasome. The sequence is that of Apoptosis-resistant E3 ubiquitin protein ligase 1 (Arel1) from Mus musculus (Mouse).